The sequence spans 712 residues: MFEKPVVKTFQYGNHTVTLETGVMARQATAAVMATMDDTAVFVSVVGKKEAVVGQDFFPLTVNYQERTYAAGKIPGGFFKREGRPSEGETLIARLIDRPIRPLFPDGFTNEVQVIATVVSVNPDVQPDIISMIGTSAALAISGLPFNGPIGAARVGHIDGQLVLNPSEKELKQSRLDLVVAGTDNAVLMVESEAQILTEEEMLAAVVFGHDQQQAVIKAINEFAAEVATPAWEWVAPAENTELKAKVAALAETRLVEAYQITEKMARYDRIHAISSEVTAALLAENEALDTKEIHTIFHDLEKTVVRRSIIAGNPRIDGREKDMVRALDVRTGVLPRTHGSALFTRGETQALVTATLGTQRDAQIIDELTGEKKDHFLLHYNFPPYCVGETGFVGSPKRREIGHGRLAKRGIAAVMPSPEEFPYTVRVVSEITESNGSSSMASVCGSSLALMDAGVPIKASVAGIAMGLVKEENDFVVLSDILGDEDHLGDMDFKVAGTATGVTALQMDIKIEGITKEIMQIALNQAKGARLHILSVMDQAISAARSDISEFAPRIHTMKISVEKIKDVIGKGGAVIRQLTEETGTTIEIEDDGTIKIAATDGDQAKEAIRRIQEITAEVEVGVIYTGKVARLADFGAFVTILPGKDGLVHISQIADKRVEKVSDYLTEGQEVQVKVLEIDRQGRVRLSMKEAVETSDAAAEVAPQAAPQAE.

Residues D487 and D493 each coordinate Mg(2+). Residues 554–613 (PRIHTMKISVEKIKDVIGKGGAVIRQLTEETGTTIEIEDDGTIKIAATDGDQAKEAIRRI) form the KH domain. The S1 motif domain maps to 623 to 691 (GVIYTGKVAR…RQGRVRLSMK (69 aa)).

This sequence belongs to the polyribonucleotide nucleotidyltransferase family. In terms of assembly, component of the RNA degradosome, which is a multiprotein complex involved in RNA processing and mRNA degradation. Mg(2+) serves as cofactor.

The protein resides in the cytoplasm. It carries out the reaction RNA(n+1) + phosphate = RNA(n) + a ribonucleoside 5'-diphosphate. Functionally, involved in mRNA degradation. Catalyzes the phosphorolysis of single-stranded polyribonucleotides processively in the 3'- to 5'-direction. The chain is Polyribonucleotide nucleotidyltransferase from Vibrio cholerae serotype O1 (strain ATCC 39541 / Classical Ogawa 395 / O395).